The sequence spans 68 residues: Large ribosomal subunit protein uL29 (68 aa).

The protein belongs to the universal ribosomal protein uL29 family.

This is Large ribosomal subunit protein uL29 from Nitrobacter winogradskyi (strain ATCC 25391 / DSM 10237 / CIP 104748 / NCIMB 11846 / Nb-255).